A 367-amino-acid chain; its full sequence is 3-dehydroquinate synthase (367 aa).

Residues 69 to 74, 103 to 107, 127 to 128, K140, and K149 contribute to the NAD(+) site; these read DGEAFK, GVIGD, and TT. Zn(2+)-binding residues include E182, H245, and H262.

Belongs to the sugar phosphate cyclases superfamily. Dehydroquinate synthase family. Requires Co(2+) as cofactor. It depends on Zn(2+) as a cofactor. The cofactor is NAD(+).

The protein localises to the cytoplasm. It carries out the reaction 7-phospho-2-dehydro-3-deoxy-D-arabino-heptonate = 3-dehydroquinate + phosphate. The protein operates within metabolic intermediate biosynthesis; chorismate biosynthesis; chorismate from D-erythrose 4-phosphate and phosphoenolpyruvate: step 2/7. Functionally, catalyzes the conversion of 3-deoxy-D-arabino-heptulosonate 7-phosphate (DAHP) to dehydroquinate (DHQ). The chain is 3-dehydroquinate synthase from Pseudomonas savastanoi pv. phaseolicola (strain 1448A / Race 6) (Pseudomonas syringae pv. phaseolicola (strain 1448A / Race 6)).